The sequence spans 412 residues: Glutamate-1-semialdehyde 2,1-aminomutase (412 aa).

Residue K260 is modified to N6-(pyridoxal phosphate)lysine.

The protein belongs to the class-III pyridoxal-phosphate-dependent aminotransferase family. HemL subfamily. Pyridoxal 5'-phosphate is required as a cofactor.

The protein resides in the cytoplasm. The catalysed reaction is (S)-4-amino-5-oxopentanoate = 5-aminolevulinate. It functions in the pathway porphyrin-containing compound metabolism; protoporphyrin-IX biosynthesis; 5-aminolevulinate from L-glutamyl-tRNA(Glu): step 2/2. This Methanocorpusculum labreanum (strain ATCC 43576 / DSM 4855 / Z) protein is Glutamate-1-semialdehyde 2,1-aminomutase.